The sequence spans 198 residues: Dual specificity protein phosphatase 14 (198 aa).

Residues 26 to 167 enclose the Tyrosine-protein phosphatase domain; the sequence is GIAQITSSLF…LIDYESQLFG (142 aa). Cys-111 functions as the Phosphocysteine intermediate in the catalytic mechanism.

Belongs to the protein-tyrosine phosphatase family. Non-receptor class dual specificity subfamily.

It catalyses the reaction O-phospho-L-tyrosyl-[protein] + H2O = L-tyrosyl-[protein] + phosphate. The catalysed reaction is O-phospho-L-seryl-[protein] + H2O = L-seryl-[protein] + phosphate. It carries out the reaction O-phospho-L-threonyl-[protein] + H2O = L-threonyl-[protein] + phosphate. Involved in the inactivation of MAP kinases. Dephosphorylates ERK, JNK and p38 MAP-kinases. Plays a negative role in TCR signaling by dephosphorylating MAP3K7 adapter TAB1 leading to its inactivation. In Mus musculus (Mouse), this protein is Dual specificity protein phosphatase 14 (Dusp14).